The sequence spans 460 residues: Cysteine--tRNA ligase (460 aa).

Zn(2+) is bound at residue cysteine 28. The 'HIGH' region signature appears at methionine 30 to histidine 40. Positions 209, 234, and 238 each coordinate Zn(2+). The 'KMSKS' region motif lies at lysine 266 to serine 270. Lysine 269 is a binding site for ATP.

It belongs to the class-I aminoacyl-tRNA synthetase family. In terms of assembly, monomer. Zn(2+) is required as a cofactor.

It is found in the cytoplasm. It catalyses the reaction tRNA(Cys) + L-cysteine + ATP = L-cysteinyl-tRNA(Cys) + AMP + diphosphate. This chain is Cysteine--tRNA ligase, found in Pseudomonas savastanoi pv. phaseolicola (strain 1448A / Race 6) (Pseudomonas syringae pv. phaseolicola (strain 1448A / Race 6)).